The primary structure comprises 1487 residues: Protein cft1 (1487 aa).

Residues 486–504 (DLDLDDEDLEDDDDDDLYG) show a composition bias toward acidic residues. Positions 486 to 513 (DLDLDDEDLEDDDDDDLYGEESASPEQA) are disordered.

The protein belongs to the CFT1 family.

The protein localises to the nucleus. Its function is as follows. RNA-binding component of the cleavage and polyadenylation factor (CPF) complex, which plays a key role in polyadenylation-dependent pre-mRNA 3'-end formation and cooperates with cleavage factors including the CFIA complex and hrp1/CFIB. Involved in poly(A) site recognition. May be involved in coupling transcription termination and mRNA 3'-end formation. The sequence is that of Protein cft1 (paa-3) from Neurospora crassa (strain ATCC 24698 / 74-OR23-1A / CBS 708.71 / DSM 1257 / FGSC 987).